Consider the following 150-residue polypeptide: MITQKMKYALKALLELADEARRDSPQALTIEEIATRSGTPKRFLEHILLDLRKAGVVASIRGRSGGYSLLKAPRDVSISELVRRIDGPIAPLPCLSRSAYQPCDDCHDEAACRIRKVFAEVFWSYLVLIDSLTLEDMLAAGNPAAKLLED.

In terms of domain architecture, HTH rrf2-type spans 1–139 (MITQKMKYAL…DSLTLEDMLA (139 aa)).

This Rhodobacter capsulatus (strain ATCC BAA-309 / NBRC 16581 / SB1003) protein is Putative HTH-type transcriptional regulator rrf2-like.